The sequence spans 396 residues: Putative 2-hydroxyacid dehydrogenase YPL113C (396 aa).

NAD(+) contacts are provided by residues 227 to 228 (SI), 311 to 313 (VGR), and Asp337. Arg313 is an active-site residue. Glu342 is an active-site residue. His361 functions as the Proton donor in the catalytic mechanism. 361-364 (HIGS) contacts NAD(+).

Belongs to the D-isomer specific 2-hydroxyacid dehydrogenase family.

Its function is as follows. Putative 2-hydroxyacid dehydrogenase. This chain is Putative 2-hydroxyacid dehydrogenase YPL113C, found in Saccharomyces cerevisiae (strain ATCC 204508 / S288c) (Baker's yeast).